Reading from the N-terminus, the 288-residue chain is 4-hydroxybenzoate octaprenyltransferase (288 aa).

8 helical membrane-spanning segments follow: residues 23 to 43, 46 to 66, 98 to 118, 141 to 161, 163 to 183, 213 to 233, 234 to 254, and 268 to 288; these read IGSL…GRGI, AKIL…GCVV, ILFV…NSMT, LPQV…FAAV, ESLP…TVAY, LIIG…GWLM, NLGG…THQQ, and AFLN…ISYW.

It belongs to the UbiA prenyltransferase family. The cofactor is Mg(2+).

It localises to the cell inner membrane. It carries out the reaction all-trans-octaprenyl diphosphate + 4-hydroxybenzoate = 4-hydroxy-3-(all-trans-octaprenyl)benzoate + diphosphate. Its pathway is cofactor biosynthesis; ubiquinone biosynthesis. Its function is as follows. Catalyzes the prenylation of para-hydroxybenzoate (PHB) with an all-trans polyprenyl group. Mediates the second step in the final reaction sequence of ubiquinone-8 (UQ-8) biosynthesis, which is the condensation of the polyisoprenoid side chain with PHB, generating the first membrane-bound Q intermediate 3-octaprenyl-4-hydroxybenzoate. This Yersinia pseudotuberculosis serotype O:1b (strain IP 31758) protein is 4-hydroxybenzoate octaprenyltransferase.